The primary structure comprises 203 residues: V-type ATP synthase subunit D (203 aa).

This sequence belongs to the V-ATPase D subunit family.

Functionally, produces ATP from ADP in the presence of a proton gradient across the membrane. The sequence is that of V-type ATP synthase subunit D from Streptococcus pneumoniae serotype 19F (strain G54).